A 148-amino-acid chain; its full sequence is Pivalyl-CoA mutase small subunit (148 aa).

Residues 8-138 enclose the B12-binding domain; it reads PLRVLVTKIG…TALGQKSRAE (131 aa). His-21 serves as a coordination point for adenosylcob(III)alamin.

This sequence belongs to the acyl-CoA mutase small subunit family. In terms of assembly, monomer in the absence of the PCM large subunit. Weakly interacts with the PCM large subunit; an alpha(2)beta(2) stoichiometry seems to represent the active state of the enzyme. It depends on adenosylcob(III)alamin as a cofactor.

It catalyses the reaction 3-methylbutanoyl-CoA = 2,2-dimethylpropanoyl-CoA. Functionally, together with Xaut_5043, catalyzes the reversible isomerization between pivalyl-CoA and isovaleryl-CoA, using radical chemistry. Does not exhibit isobutyryl-CoA mutase (ICM) activity. The chain is Pivalyl-CoA mutase small subunit from Xanthobacter autotrophicus (strain ATCC BAA-1158 / Py2).